The primary structure comprises 398 residues: Na(+)/H(+) antiporter NhaA (398 aa).

The next 11 helical transmembrane spans lie at 21–41 (LGGY…NSPL), 66–86 (VLHW…GLEI), 101–121 (IVLP…VYLL), 132–152 (GWAI…ALLG), 161–181 (IFLT…IAVF), 184–204 (AELN…LCVL), 216–236 (LLVG…ATLA), 274–294 (LLIV…GMGI), 305–325 (IALG…WLAI), 343–363 (GVAL…ALAF), and 374–394 (IGVL…LRVL).

Belongs to the NhaA Na(+)/H(+) (TC 2.A.33) antiporter family.

It localises to the cell inner membrane. The catalysed reaction is Na(+)(in) + 2 H(+)(out) = Na(+)(out) + 2 H(+)(in). Na(+)/H(+) antiporter that extrudes sodium in exchange for external protons. In Bordetella bronchiseptica (strain ATCC BAA-588 / NCTC 13252 / RB50) (Alcaligenes bronchisepticus), this protein is Na(+)/H(+) antiporter NhaA.